The chain runs to 262 residues: Putative dimethyl sulfoxide reductase iron-sulfur subunit B (262 aa).

4Fe-4S ferredoxin-type domains are found at residues 4–34, 62–93, and 94–123; these read YGLV…MGQF, LEMT…TRDD, and GIVE…FNWD. Residues cysteine 13, cysteine 16, cysteine 19, cysteine 23, cysteine 71, cysteine 74, cysteine 79, cysteine 83, cysteine 103, cysteine 106, cysteine 109, cysteine 113, cysteine 147, cysteine 150, cysteine 162, and cysteine 166 each contribute to the [4Fe-4S] cluster site. Residues 209–262 are disordered; that stretch reads NGEMSPGRPWKSKKLESELDDDEAAKAARRRSGSVENGYDVTPHVPAETAGGDD.

As to quaternary structure, probable multiprotein complex that likely consists of DmsA, DmsB and DmsC. Requires [4Fe-4S] cluster as cofactor.

Its subcellular location is the cell membrane. Dimethyl sulfoxide (DMSO) reductase catalyzes the reduction of dimethyl sulfoxide (DMSO) to dimethyl sulfide (DMS) during anaerobic respiration; it can also use trimethylamine N-oxide (TMAO) as terminal electron acceptor. Subunit B is proposed to be involved in electron transfer. This is Putative dimethyl sulfoxide reductase iron-sulfur subunit B (dmsB) from Halobacterium salinarum (strain ATCC 700922 / JCM 11081 / NRC-1) (Halobacterium halobium).